The sequence spans 44 residues: MSDKPDISEVTSFDKTKLKKTETQEKNPLPSKETIEQEKAAATS.

Composition is skewed to basic and acidic residues over residues 1 to 25 and 33 to 44; these read MSDK…ETQE and ETIEQEKAAATS. The interval 1 to 44 is disordered; it reads MSDKPDISEVTSFDKTKLKKTETQEKNPLPSKETIEQEKAAATS. Serine 2 is modified (N-acetylserine).

The protein belongs to the thymosin beta family.

Its subcellular location is the cytoplasm. The protein resides in the cytoskeleton. Plays an important role in the organization of the cytoskeleton. Binds to and sequesters actin monomers (G actin) and therefore inhibits actin polymerization. The protein is Thymosin beta-12 of Lateolabrax japonicus (Japanese sea perch).